Reading from the N-terminus, the 378-residue chain is Alkanesulfonate monooxygenase (378 aa).

The protein belongs to the SsuD family.

It catalyses the reaction an alkanesulfonate + FMNH2 + O2 = an aldehyde + FMN + sulfite + H2O + 2 H(+). Catalyzes the desulfonation of aliphatic sulfonates. The chain is Alkanesulfonate monooxygenase from Bacillus velezensis (strain DSM 23117 / BGSC 10A6 / LMG 26770 / FZB42) (Bacillus amyloliquefaciens subsp. plantarum).